A 694-amino-acid chain; its full sequence is DNA-directed RNA polymerase subunit beta' (694 aa).

The Zn(2+) site is built by cysteine 69, cysteine 71, cysteine 87, and cysteine 90. Mg(2+)-binding residues include aspartate 489, aspartate 491, and aspartate 493.

It belongs to the RNA polymerase beta' chain family. RpoC1 subfamily. As to quaternary structure, in plastids the minimal PEP RNA polymerase catalytic core is composed of four subunits: alpha, beta, beta', and beta''. When a (nuclear-encoded) sigma factor is associated with the core the holoenzyme is formed, which can initiate transcription. Mg(2+) serves as cofactor. Zn(2+) is required as a cofactor.

It is found in the plastid. The protein localises to the chloroplast. The catalysed reaction is RNA(n) + a ribonucleoside 5'-triphosphate = RNA(n+1) + diphosphate. In terms of biological role, DNA-dependent RNA polymerase catalyzes the transcription of DNA into RNA using the four ribonucleoside triphosphates as substrates. The chain is DNA-directed RNA polymerase subunit beta' from Gossypium barbadense (Sea Island cotton).